Reading from the N-terminus, the 378-residue chain is TelA-like protein SAS1347 (378 aa).

It belongs to the TelA family.

The chain is TelA-like protein SAS1347 from Staphylococcus aureus (strain MSSA476).